Consider the following 302-residue polypeptide: tRNA-cytidine(32) 2-sulfurtransferase (302 aa).

A PP-loop motif motif is present at residues 43 to 48; that stretch reads SGGKDS. Cys118, Cys121, and Cys209 together coordinate [4Fe-4S] cluster.

The protein belongs to the TtcA family. Homodimer. Mg(2+) is required as a cofactor. The cofactor is [4Fe-4S] cluster.

It localises to the cytoplasm. It catalyses the reaction cytidine(32) in tRNA + S-sulfanyl-L-cysteinyl-[cysteine desulfurase] + AH2 + ATP = 2-thiocytidine(32) in tRNA + L-cysteinyl-[cysteine desulfurase] + A + AMP + diphosphate + H(+). Its pathway is tRNA modification. Catalyzes the ATP-dependent 2-thiolation of cytidine in position 32 of tRNA, to form 2-thiocytidine (s(2)C32). The sulfur atoms are provided by the cysteine/cysteine desulfurase (IscS) system. This chain is tRNA-cytidine(32) 2-sulfurtransferase, found in Polynucleobacter asymbioticus (strain DSM 18221 / CIP 109841 / QLW-P1DMWA-1) (Polynucleobacter necessarius subsp. asymbioticus).